A 95-amino-acid polypeptide reads, in one-letter code: Aspartyl/glutamyl-tRNA(Asn/Gln) amidotransferase subunit C (95 aa).

It belongs to the GatC family. As to quaternary structure, heterotrimer of A, B and C subunits.

It carries out the reaction L-glutamyl-tRNA(Gln) + L-glutamine + ATP + H2O = L-glutaminyl-tRNA(Gln) + L-glutamate + ADP + phosphate + H(+). The catalysed reaction is L-aspartyl-tRNA(Asn) + L-glutamine + ATP + H2O = L-asparaginyl-tRNA(Asn) + L-glutamate + ADP + phosphate + 2 H(+). Functionally, allows the formation of correctly charged Asn-tRNA(Asn) or Gln-tRNA(Gln) through the transamidation of misacylated Asp-tRNA(Asn) or Glu-tRNA(Gln) in organisms which lack either or both of asparaginyl-tRNA or glutaminyl-tRNA synthetases. The reaction takes place in the presence of glutamine and ATP through an activated phospho-Asp-tRNA(Asn) or phospho-Glu-tRNA(Gln). This chain is Aspartyl/glutamyl-tRNA(Asn/Gln) amidotransferase subunit C, found in Trichlorobacter lovleyi (strain ATCC BAA-1151 / DSM 17278 / SZ) (Geobacter lovleyi).